Here is a 341-residue protein sequence, read N- to C-terminus: Protein BEARSKIN2 (341 aa).

The region spanning 9–160 is the NAC domain; that stretch reads VPPGFRFHPT…GWVVCRVFMK (152 aa). The DNA-binding element occupies 109–166; sequence IGMRKTLVFYKGRAPHGQKTDWIMHEYRLEDADDPQANPSEDGWVVCRVFMKKNLFKV.

Expressed throughout the root cap, in both columella (COL) and lateral root cap (LRC) cells, with higher levels in the COL-adjoining LRC than the upper LRC. Also present at low levels expression in the tips of cotyledons and the cotyledon vasculature, as weel as in vasculature of the first pair of true leaves and at the hydathodes.

It is found in the nucleus. Functionally, transcription activator. Together with BRN1 and SMB, regulates cellular maturation of root cap. Promotes the expression of genes involved in secondary cell walls (SCW) biosynthesis. This Arabidopsis thaliana (Mouse-ear cress) protein is Protein BEARSKIN2 (BRN2).